The primary structure comprises 311 residues: tRNA pseudouridine synthase B (311 aa).

D49 serves as the catalytic Nucleophile.

This sequence belongs to the pseudouridine synthase TruB family. Type 1 subfamily.

It carries out the reaction uridine(55) in tRNA = pseudouridine(55) in tRNA. In terms of biological role, responsible for synthesis of pseudouridine from uracil-55 in the psi GC loop of transfer RNAs. This chain is tRNA pseudouridine synthase B, found in Actinobacillus succinogenes (strain ATCC 55618 / DSM 22257 / CCUG 43843 / 130Z).